Here is a 108-residue protein sequence, read N- to C-terminus: Transcription initiation factor IIA subunit 2 (108 aa).

It belongs to the TFIIA subunit 2 family. As to quaternary structure, TFIIA is a heterodimer of the large unprocessed subunit 1 and a small subunit gamma. It was originally believed to be a heterotrimer of an alpha, a beta and a gamma subunit. Interacts with NCOA6 general coactivator. TFIIA forms a complex with TBP.

Its subcellular location is the nucleus. Its function is as follows. TFIIA is a component of the transcription machinery of RNA polymerase II and plays an important role in transcriptional activation. TFIIA in a complex with TBP mediates transcriptional activity. The sequence is that of Transcription initiation factor IIA subunit 2 (gtf2a2) from Oncorhynchus mykiss (Rainbow trout).